The primary structure comprises 876 residues: Bifunctional uridylyltransferase/uridylyl-removing enzyme (876 aa).

The uridylyltransferase stretch occupies residues 1 to 332; that stretch reads MPYQSPITFQ…NNGEEAEAVI (332 aa). Residues 333–692 form a uridylyl-removing region; it reads IDDDFQRRGN…LSKKATRGGT (360 aa). Residues 451-573 form the HD domain; sequence VDEHSIRLLK…VRDEERLEYL (123 aa). ACT domains follow at residues 693–777 and 800–876; these read EVFI…RIPR and LMEF…PSAQ.

It belongs to the GlnD family. Requires Mg(2+) as cofactor.

It carries out the reaction [protein-PII]-L-tyrosine + UTP = [protein-PII]-uridylyl-L-tyrosine + diphosphate. The catalysed reaction is [protein-PII]-uridylyl-L-tyrosine + H2O = [protein-PII]-L-tyrosine + UMP + H(+). Uridylyltransferase (UTase) activity is inhibited by glutamine, while glutamine activates uridylyl-removing (UR) activity. Functionally, modifies, by uridylylation and deuridylylation, the PII regulatory proteins (GlnB and homologs), in response to the nitrogen status of the cell that GlnD senses through the glutamine level. Under low glutamine levels, catalyzes the conversion of the PII proteins and UTP to PII-UMP and PPi, while under higher glutamine levels, GlnD hydrolyzes PII-UMP to PII and UMP (deuridylylation). Thus, controls uridylylation state and activity of the PII proteins, and plays an important role in the regulation of nitrogen assimilation and metabolism. This is Bifunctional uridylyltransferase/uridylyl-removing enzyme from Vibrio cholerae serotype O1 (strain ATCC 39315 / El Tor Inaba N16961).